Reading from the N-terminus, the 385-residue chain is tRNA pseudouridine synthase D (385 aa).

Catalysis depends on Asp-86, which acts as the Nucleophile. Residues 165 to 305 (GFPNYFGNQR…TRFLQKDIAP (141 aa)) form the TRUD domain.

The protein belongs to the pseudouridine synthase TruD family.

The catalysed reaction is uridine(13) in tRNA = pseudouridine(13) in tRNA. Responsible for synthesis of pseudouridine from uracil-13 in transfer RNAs. This Helicobacter hepaticus (strain ATCC 51449 / 3B1) protein is tRNA pseudouridine synthase D.